Consider the following 1187-residue polypeptide: Nicotinate dehydrogenase subunit B (1187 aa).

Residues 764–784 (WWFGSLAGVFGAALGMLATAL) traverse the membrane as a helical segment. 3 Cytochrome c domains span residues 804–907 (AMLE…MSQT), 949–1057 (AQWN…SSLE), and 1075–1163 (VSLS…RHRF). Heme c is bound by residues Cys818, Cys821, His822, Cys964, Cys967, His968, Cys1088, Cys1091, and His1092.

Mo-molybdopterin cytosine dinucleotide is required as a cofactor.

The protein localises to the membrane. It catalyses the reaction 2 Fe(III)-[cytochrome] + nicotinate + H2O = 2 Fe(II)-[cytochrome] + 6-hydroxynicotinate + 2 H(+). It participates in cofactor degradation; nicotinate degradation. Its function is as follows. Subunit of the two-component enzyme NicAB that mediates nicotinate hydroxylation, the first step in the aerobic nicotinate degradation pathway. Mediates conversion of nicotinate into 6-hydroxynicotinate (6HNA). The chain is Nicotinate dehydrogenase subunit B (nicB) from Pseudomonas putida (strain ATCC 47054 / DSM 6125 / CFBP 8728 / NCIMB 11950 / KT2440).